We begin with the raw amino-acid sequence, 295 residues long: NAD kinase (295 aa).

The active-site Proton acceptor is D74. NAD(+)-binding positions include 74 to 75 (DG), 148 to 149 (NE), R176, D178, and 189 to 194 (TAYAMS).

It belongs to the NAD kinase family. The cofactor is a divalent metal cation.

It localises to the cytoplasm. It catalyses the reaction NAD(+) + ATP = ADP + NADP(+) + H(+). In terms of biological role, involved in the regulation of the intracellular balance of NAD and NADP, and is a key enzyme in the biosynthesis of NADP. Catalyzes specifically the phosphorylation on 2'-hydroxyl of the adenosine moiety of NAD to yield NADP. This Acidithiobacillus ferrooxidans (strain ATCC 23270 / DSM 14882 / CIP 104768 / NCIMB 8455) (Ferrobacillus ferrooxidans (strain ATCC 23270)) protein is NAD kinase.